We begin with the raw amino-acid sequence, 345 residues long: Tropomodulin-4 (345 aa).

A disordered region spans residues 42-63; the sequence is NMLLPAGLRQRDQTKKSPTGPL.

This sequence belongs to the tropomodulin family. As to quaternary structure, binds to the N-terminus of tropomyosin and to actin.

The protein localises to the cytoplasm. The protein resides in the cytoskeleton. Its function is as follows. Blocks the elongation and depolymerization of the actin filaments at the pointed end. The Tmod/TM complex contributes to the formation of the short actin protofilament, which in turn defines the geometry of the membrane skeleton. The chain is Tropomodulin-4 (TMOD4) from Bos taurus (Bovine).